The following is a 287-amino-acid chain: Large ribosomal subunit protein uL2 (287 aa).

Residues arginine 221–serine 287 form a disordered region. Basic residues predominate over residues lysine 258 to serine 287.

Belongs to the universal ribosomal protein uL2 family. Part of the 50S ribosomal subunit. Forms a bridge to the 30S subunit in the 70S ribosome.

Its function is as follows. One of the primary rRNA binding proteins. Required for association of the 30S and 50S subunits to form the 70S ribosome, for tRNA binding and peptide bond formation. It has been suggested to have peptidyltransferase activity; this is somewhat controversial. Makes several contacts with the 16S rRNA in the 70S ribosome. This chain is Large ribosomal subunit protein uL2, found in Prochlorococcus marinus (strain MIT 9211).